Here is a 209-residue protein sequence, read N- to C-terminus: Uracil phosphoribosyltransferase (209 aa).

5-phospho-alpha-D-ribose 1-diphosphate is bound by residues Arg-79, Arg-104, and 131–139 (DPMLATGGS). Uracil contacts are provided by residues Ile-194 and 199 to 201 (GDA). Asp-200 contributes to the 5-phospho-alpha-D-ribose 1-diphosphate binding site.

The protein belongs to the UPRTase family. Mg(2+) is required as a cofactor.

The enzyme catalyses UMP + diphosphate = 5-phospho-alpha-D-ribose 1-diphosphate + uracil. It functions in the pathway pyrimidine metabolism; UMP biosynthesis via salvage pathway; UMP from uracil: step 1/1. Its activity is regulated as follows. Allosterically activated by GTP. In terms of biological role, catalyzes the conversion of uracil and 5-phospho-alpha-D-ribose 1-diphosphate (PRPP) to UMP and diphosphate. This is Uracil phosphoribosyltransferase from Latilactobacillus sakei (Lactobacillus sakei).